Here is a 380-residue protein sequence, read N- to C-terminus: Capsular polysaccharide biosynthesis glycosyltransferase CapM (380 aa).

Belongs to the glycosyltransferase group 1 family. Glycosyltransferase 4 subfamily.

It functions in the pathway capsule biogenesis; capsule polysaccharide biosynthesis. Functionally, required for the biosynthesis of type 1 capsular polysaccharide. The polypeptide is Capsular polysaccharide biosynthesis glycosyltransferase CapM (capM) (Staphylococcus aureus).